A 121-amino-acid polypeptide reads, in one-letter code: Aspartate 1-decarboxylase (121 aa).

Catalysis depends on Ser25, which acts as the Schiff-base intermediate with substrate; via pyruvic acid. Residue Ser25 is modified to Pyruvic acid (Ser). Thr57 contacts substrate. The active-site Proton donor is the Tyr58. 73 to 75 contributes to the substrate binding site; that stretch reads GAA.

Belongs to the PanD family. As to quaternary structure, heterooctamer of four alpha and four beta subunits. Pyruvate is required as a cofactor. Is synthesized initially as an inactive proenzyme, which is activated by self-cleavage at a specific serine bond to produce a beta-subunit with a hydroxyl group at its C-terminus and an alpha-subunit with a pyruvoyl group at its N-terminus.

It localises to the cytoplasm. The enzyme catalyses L-aspartate + H(+) = beta-alanine + CO2. It participates in cofactor biosynthesis; (R)-pantothenate biosynthesis; beta-alanine from L-aspartate: step 1/1. Functionally, catalyzes the pyruvoyl-dependent decarboxylation of aspartate to produce beta-alanine. This Wolinella succinogenes (strain ATCC 29543 / DSM 1740 / CCUG 13145 / JCM 31913 / LMG 7466 / NCTC 11488 / FDC 602W) (Vibrio succinogenes) protein is Aspartate 1-decarboxylase.